Here is a 353-residue protein sequence, read N- to C-terminus: G-protein coupled estrogen receptor 1 (353 aa).

Over 1-40 (MEEQTTNVIQIYVNGTEQFNASFDFNITDVKESTDTYEFY) the chain is Extracellular. The chain crosses the membrane as a helical span at residues 41–61 (IIGLFLSCLYTIFLFPIGFIG). Residues 62–81 (NILILVVNLNHRERMTIPDL) lie on the Cytoplasmic side of the membrane. Residues 82–102 (YFVNLAVADLILVADSLIEVF) traverse the membrane as a helical segment. At 103 to 112 (NLNEKYYDYA) the chain is on the extracellular side. The helical transmembrane segment at 113–133 (VLCTFMSLFLQVNMYSSIFFL) threads the bilayer. Residues C115 and C192 are joined by a disulfide bond. The Cytoplasmic portion of the chain corresponds to 134–160 (TWMSFDRYVALTSSMSSSPLRTMQHAK). The helical transmembrane segment at 161–181 (LSCSLIWMASILATLLPFTIV) threads the bilayer. Over 182–202 (QTQHTGEVHFCFANVFEIQWL) the chain is Extracellular. A helical transmembrane segment spans residues 203–223 (EVTIGFLIPFSIIGLCYSLIV). Over 224–245 (RTLMRAQKHKGLWPRRQKALRM) the chain is Cytoplasmic. A helical membrane pass occupies residues 246–266 (IVVVVLVFFICWLPENVFISI). Over 267-292 (QLLQGTADPSKRTDTTLWHDYPLTGH) the chain is Extracellular. Residues 293–313 (IVNLAAFSNSCLNPIIYSFLG) traverse the membrane as a helical segment. At 314-353 (ETFRDKLRLFIKRKASWSVVYRFCNHTLDLQIPVRSESEV) the chain is on the cytoplasmic side.

It belongs to the G-protein coupled receptor 1 family. Homodimer. Heterodimer. Expressed in brain regions that are known to control reproduction and sex behavior. Expressed in ovary, muscle and intestine. Expressed in early germ cells of the testis, including the spermatogonia, spermatocytes, and somatic cells such as Sertoli cells.

The protein localises to the nucleus. It localises to the cytoplasm. Its subcellular location is the perinuclear region. It is found in the cytoskeleton. The protein resides in the cytoplasmic vesicle membrane. The protein localises to the cell membrane. It localises to the basolateral cell membrane. Its subcellular location is the endoplasmic reticulum membrane. It is found in the early endosome. The protein resides in the recycling endosome. The protein localises to the golgi apparatus. It localises to the trans-Golgi network. Its subcellular location is the golgi apparatus membrane. It is found in the cell projection. The protein resides in the dendrite. The protein localises to the dendritic spine membrane. It localises to the axon. Its subcellular location is the postsynaptic density. It is found in the mitochondrion membrane. Functionally, membrane G-protein coupled estrogen receptor that binds to 17-beta-estradiol (E2) with high affinity, leading to rapid and transient activation of numerous intracellular signaling pathways. Plays a role in the embryonic development of sensory and motor neurons. Specifically induces apoptosis and reduces proliferation of brain cells. Involved in maintenance of meiotic arrest in oocytes. This chain is G-protein coupled estrogen receptor 1 (gper1), found in Danio rerio (Zebrafish).